Consider the following 142-residue polypeptide: Large ribosomal subunit protein uL13 (142 aa).

The protein belongs to the universal ribosomal protein uL13 family. In terms of assembly, part of the 50S ribosomal subunit.

Functionally, this protein is one of the early assembly proteins of the 50S ribosomal subunit, although it is not seen to bind rRNA by itself. It is important during the early stages of 50S assembly. The polypeptide is Large ribosomal subunit protein uL13 (Paraburkholderia phytofirmans (strain DSM 17436 / LMG 22146 / PsJN) (Burkholderia phytofirmans)).